The primary structure comprises 188 residues: Large ribosomal subunit protein eL18 (188 aa).

Lys-119 participates in a covalent cross-link: Glycyl lysine isopeptide (Lys-Gly) (interchain with G-Cter in SUMO2). Phosphoserine is present on Ser-130. Residues 150–188 (RHFGKAPGTPHSHTKPYVRSKGRKFERARGRRASRGYKN) are disordered. Residue Thr-158 is modified to Phosphothreonine. Composition is skewed to basic residues over residues 161-171 (SHTKPYVRSKG) and 178-188 (RGRRASRGYKN). Lys-164 is covalently cross-linked (Glycyl lysine isopeptide (Lys-Gly) (interchain with G-Cter in SUMO2)).

Belongs to the eukaryotic ribosomal protein eL18 family. Component of the large ribosomal subunit.

It localises to the cytoplasm. The protein resides in the cytosol. Its subcellular location is the rough endoplasmic reticulum. Component of the large ribosomal subunit. The ribosome is a large ribonucleoprotein complex responsible for the synthesis of proteins in the cell. This is Large ribosomal subunit protein eL18 (Rpl18) from Mus musculus (Mouse).